The chain runs to 606 residues: ATP-dependent rRNA helicase SPB4 (606 aa).

The short motif at W7–A35 is the Q motif element. One can recognise a Helicase ATP-binding domain in the interval I38–I224. ATP is bound at residue S51–T58. Residues D172 to D175 carry the DEAD box motif. A Helicase C-terminal domain is found at K248–T404. S254 carries the phosphoserine modification. Positions K539–W582 form a coiled coil.

This sequence belongs to the DEAD box helicase family. DDX55/SPB4 subfamily. As to quaternary structure, component of pre-60S ribosomal complexes.

Its subcellular location is the nucleus. The protein resides in the nucleolus. It catalyses the reaction ATP + H2O = ADP + phosphate + H(+). In terms of biological role, ATP-binding RNA helicase involved in the biogenesis of 60S ribosomal subunits. Binds 90S pre-ribosomal particles and dissociates from pre-60S ribosomal particles after processing of 27SB pre-rRNA. Required for the normal formation of 18S rRNA through the processing of pre-rRNAs at sites A0, A1 and A2, and the normal formation of 25S and 5.8S rRNAs through the processing of pre-rRNAs at sites C1 and C2. Also required for recruitment of NOG2 to pre-ribosomes. The protein is ATP-dependent rRNA helicase SPB4 of Saccharomyces cerevisiae (strain ATCC 204508 / S288c) (Baker's yeast).